An 802-amino-acid polypeptide reads, in one-letter code: Serine/threonine-protein kinase zyg-8 (802 aa).

A compositionally biased stretch (polar residues) spans 1–13; that stretch reads MPQTSAWQLNDTT. A disordered region spans residues 1 to 102; the sequence is MPQTSAWQLN…SAPSTSSAHR (102 aa). The span at 15-24 shows a compositional bias: pro residues; the sequence is RPPPPPPPPG. Over residues 89–99 the composition is skewed to low complexity; sequence SPSSSAPSTSS. 2 consecutive Doublecortin domains span residues 211–298 and 340–423; these read KRLR…VDYS and RIIK…ADDL. Residues 430–470 form a disordered region; the sequence is HKSVGSGTSSNMRRTSRRSTMPNRNESLRHDRSGSVIPDQD. The segment covering 434–454 has biased composition (low complexity); sequence GSGTSSNMRRTSRRSTMPNRN. The Protein kinase domain maps to 482-743; that stretch reads FQLVRLIGDG…AGELLNDEWM (262 aa). ATP is bound by residues 488–496 and Lys512; that span reads IGDGNTAVV. Residue Asp604 is the Proton acceptor of the active site.

It belongs to the protein kinase superfamily. CAMK Ser/Thr protein kinase family. CaMK subfamily. In terms of assembly, interacts with tac-1. In terms of tissue distribution, expressed in AFD thermosensory neurons. Expressed in cells near the nerve ring, in motor neurons in the ventral nerve cord and in the six touch receptor neurons including ALML/R, PLML/R and AVM and PVM. Expressed in hypodermal and neural tissues and in the germline.

The protein localises to the cytoplasm. The protein resides in the cytoskeleton. It is found in the microtubule organizing center. Its subcellular location is the centrosome. It localises to the spindle. The enzyme catalyses L-seryl-[protein] + ATP = O-phospho-L-seryl-[protein] + ADP + H(+). It carries out the reaction L-threonyl-[protein] + ATP = O-phospho-L-threonyl-[protein] + ADP + H(+). Its function is as follows. Probable kinase. Kinase activity may be involved in positioning of spindle poles in meiosis and mitosis. Plays a role in spindle positioning during asymmetric division of one-cell stage embryos. Affects spindle position by promoting microtubule assembly during anaphase. Plays a role in the assembly and stability of oocyte spindle, perhaps balancing the forces in the spindle and maintaining their morphology during metaphase. Plays a role in cell division and in embryonic viability up until gastrulation. Required for neuronal morphology and polarity and restricting ectopic process outgrowth; probably as a result of a role in maintaining microtubule integrity. Involved in maintaining neuronal microtubule number, length and packing. May promote axonal and synaptic growth. Plays a role in regulating thermotaxis responses in AFD thermosensory neurons. Required for touch sensitivity in adult touch response receptor neurons. The chain is Serine/threonine-protein kinase zyg-8 from Caenorhabditis elegans.